A 325-amino-acid chain; its full sequence is Ferrochelatase (325 aa).

Fe cation contacts are provided by H195 and E276.

Belongs to the ferrochelatase family.

It localises to the cytoplasm. It catalyses the reaction heme b + 2 H(+) = protoporphyrin IX + Fe(2+). Its pathway is porphyrin-containing compound metabolism; protoheme biosynthesis; protoheme from protoporphyrin-IX: step 1/1. Catalyzes the ferrous insertion into protoporphyrin IX. This is Ferrochelatase from Methylococcus capsulatus (strain ATCC 33009 / NCIMB 11132 / Bath).